Consider the following 213-residue polypeptide: Imidazole glycerol phosphate synthase subunit HisH (213 aa).

The Glutamine amidotransferase type-1 domain occupies 1 to 212 (MLAILDYKAG…HRYCTEAADA (212 aa)). Cys-79 serves as the catalytic Nucleophile. Active-site residues include His-187 and Glu-189.

As to quaternary structure, heterodimer of HisH and HisF.

The protein localises to the cytoplasm. It carries out the reaction 5-[(5-phospho-1-deoxy-D-ribulos-1-ylimino)methylamino]-1-(5-phospho-beta-D-ribosyl)imidazole-4-carboxamide + L-glutamine = D-erythro-1-(imidazol-4-yl)glycerol 3-phosphate + 5-amino-1-(5-phospho-beta-D-ribosyl)imidazole-4-carboxamide + L-glutamate + H(+). The catalysed reaction is L-glutamine + H2O = L-glutamate + NH4(+). It participates in amino-acid biosynthesis; L-histidine biosynthesis; L-histidine from 5-phospho-alpha-D-ribose 1-diphosphate: step 5/9. IGPS catalyzes the conversion of PRFAR and glutamine to IGP, AICAR and glutamate. The HisH subunit catalyzes the hydrolysis of glutamine to glutamate and ammonia as part of the synthesis of IGP and AICAR. The resulting ammonia molecule is channeled to the active site of HisF. This chain is Imidazole glycerol phosphate synthase subunit HisH, found in Nitratidesulfovibrio vulgaris (strain ATCC 29579 / DSM 644 / CCUG 34227 / NCIMB 8303 / VKM B-1760 / Hildenborough) (Desulfovibrio vulgaris).